The sequence spans 420 residues: Gamma-glutamyl phosphate reductase (420 aa).

This sequence belongs to the gamma-glutamyl phosphate reductase family.

It is found in the cytoplasm. It carries out the reaction L-glutamate 5-semialdehyde + phosphate + NADP(+) = L-glutamyl 5-phosphate + NADPH + H(+). It functions in the pathway amino-acid biosynthesis; L-proline biosynthesis; L-glutamate 5-semialdehyde from L-glutamate: step 2/2. Its function is as follows. Catalyzes the NADPH-dependent reduction of L-glutamate 5-phosphate into L-glutamate 5-semialdehyde and phosphate. The product spontaneously undergoes cyclization to form 1-pyrroline-5-carboxylate. This is Gamma-glutamyl phosphate reductase from Neisseria meningitidis serogroup A / serotype 4A (strain DSM 15465 / Z2491).